A 212-amino-acid chain; its full sequence is Large ribosomal subunit protein uL3 (212 aa).

The segment covering 139-153 (LSHRVTGSIGQNQTP) has biased composition (polar residues). A disordered region spans residues 139–161 (LSHRVTGSIGQNQTPGKVFKGKK). Gln151 is subject to N5-methylglutamine.

It belongs to the universal ribosomal protein uL3 family. Part of the 50S ribosomal subunit. Forms a cluster with proteins L14 and L19. In terms of processing, methylated by PrmB.

Its function is as follows. One of the primary rRNA binding proteins, it binds directly near the 3'-end of the 23S rRNA, where it nucleates assembly of the 50S subunit. The sequence is that of Large ribosomal subunit protein uL3 from Baumannia cicadellinicola subsp. Homalodisca coagulata.